The primary structure comprises 91 residues: Small ribosomal subunit protein uS19 (91 aa).

This sequence belongs to the universal ribosomal protein uS19 family.

Its function is as follows. Protein S19 forms a complex with S13 that binds strongly to the 16S ribosomal RNA. The protein is Small ribosomal subunit protein uS19 of Bordetella avium (strain 197N).